A 376-amino-acid chain; its full sequence is Non-structural protein NS2 (376 aa).

Basic and acidic residues predominate over residues glutamate 163 to aspartate 188. The tract at residues glutamate 163–asparagine 201 is disordered.

Belongs to the orbivirus non-structural protein NS2 family.

Functionally, single-stranded RNA-binding protein. The polypeptide is Non-structural protein NS2 (Segment-8) (Antilocapra americana (Pronghorn)).